We begin with the raw amino-acid sequence, 227 residues long: Lipoprotein-releasing system ATP-binding protein LolD (227 aa).

Residues 7 to 227 form the ABC transporter domain; that stretch reads LSCRDLGKSY…HLQEGHLVAI (221 aa). Residue 43-50 participates in ATP binding; that stretch reads GTSGSGKS.

Belongs to the ABC transporter superfamily. Lipoprotein translocase (TC 3.A.1.125) family. The complex is composed of two ATP-binding proteins (LolD) and two transmembrane proteins (LolC and LolE).

The protein localises to the cell inner membrane. Its function is as follows. Part of the ABC transporter complex LolCDE involved in the translocation of mature outer membrane-directed lipoproteins, from the inner membrane to the periplasmic chaperone, LolA. Responsible for the formation of the LolA-lipoprotein complex in an ATP-dependent manner. The polypeptide is Lipoprotein-releasing system ATP-binding protein LolD (Pseudomonas fluorescens (strain ATCC BAA-477 / NRRL B-23932 / Pf-5)).